Consider the following 415-residue polypeptide: Fructose-like permease IIC component (415 aa).

The Cytoplasmic segment spans residues 1 to 46 (MAIKKRSATVVPGASGAAAAVKNPQASKSSFWGELPQHVMSGISRM). In terms of domain architecture, PTS EIIC type-2 spans 35-410 (LPQHVMSGIS…RLMMFRKGKL (376 aa)). The chain crosses the membrane as a helical span at residues 47-67 (VPTLIMGGVILAFSQLIAYSW). Residues 68–101 (LKIPAEIGIMDALNSGKFSGFDLSLLKFAWLSQS) are Periplasmic-facing. Residues 102–122 (FGGVLFGFAIPMFAAFVANSI) form a helical membrane-spanning segment. Over 123–126 (GGKL) the chain is Cytoplasmic. The chain crosses the membrane as a helical span at residues 127 to 147 (AFPAGFIGGLMSTQPTQLLNF). Over 148–157 (DPSTMQWATS) the chain is Periplasmic. Residues 158-178 (SPVPSTFIGALIISIVAGYLV) traverse the membrane as a helical segment. The Cytoplasmic segment spans residues 179 to 197 (KWMNQKIQLPDFLLAFKTT). The chain crosses the membrane as a helical span at residues 198–218 (FLLPILSAIFVMLAMYYVITP). At 219-237 (FGGWINGGIRTVLTAAGEK) the chain is on the periplasmic side. The helical transmembrane segment at 238–258 (GALMYAMGIAAATAIDLGGPI) threads the bilayer. Residues 259–276 (NKAAGFVAFSFTTDHVLP) lie on the Cytoplasmic side of the membrane. A helical transmembrane segment spans residues 277 to 297 (VTARSIAIVIPPIGLGLATII). Residues 298–318 (DRRLTGKRLFNAQLYPQGKTA) are Periplasmic-facing. The helical transmembrane segment at 319 to 339 (MFLAFMGISEGAIPFALESPI) threads the bilayer. The Cytoplasmic segment spans residues 340–341 (TA). Residues 342–362 (IPSYMVGAIVGSTAAVWLGAV) form a helical membrane-spanning segment. Over 363 to 378 (QWFPESAIWAWPLVTN) the chain is Periplasmic. Residues 379–399 (LGVYMAGIALGAVITALMVVF) form a helical membrane-spanning segment. The Cytoplasmic portion of the chain corresponds to 400 to 415 (LRLMMFRKGKLLIDSL).

Its subcellular location is the cell inner membrane. The phosphoenolpyruvate-dependent sugar phosphotransferase system (PTS), a major carbohydrate active -transport system, catalyzes the phosphorylation of incoming sugar substrates concomitant with their translocation across the cell membrane. This is Fructose-like permease IIC component (fryC) from Escherichia coli O157:H7.